The chain runs to 179 residues: Calcineurin subunit B type 2 (179 aa).

A lipid anchor (N-myristoyl glycine) is attached at G2. 4 consecutive EF-hand domains span residues 18 to 53 (EEIR…QQNP), 57 to 85 (RVID…FSVK), 87 to 122 (DEEQ…MVGN), and 128 to 163 (QLQQ…MEIH). Ca(2+)-binding residues include D31, D33, S35, S37, E42, D63, D65, N67, E69, E74, D100, D102, D104, and E111. Positions 131–136 (QLVDKS) are calcineurin A binding. D141, D143, D145, R147, and E152 together coordinate Ca(2+).

This sequence belongs to the calcineurin regulatory subunit family. Forms a complex composed of a calmodulin-dependent catalytic subunit (also known as calcineurin A) and a regulatory Ca(2+)-binding subunit (also known as calcineurin B). There are three catalytic subunits, each encoded by a separate gene (PPP3CA, PPP3CB, and PPP3CC) and two regulatory subunits which are also encoded by separate genes (PPP3R1 and PPP3R2). Interacts with SPATA33 (via PQIIIT motif). Expressed in osteoblasts and bone marrow (at protein level). Expressed in the testis. Expressed in the sperm midpiece in a SPATA33-dependent manner (at protein level).

The protein localises to the mitochondrion. In terms of biological role, regulatory subunit of calcineurin, a calcium-dependent, calmodulin stimulated protein phosphatase. Confers calcium sensitivity. The polypeptide is Calcineurin subunit B type 2 (Ppp3r2) (Mus musculus (Mouse)).